A 204-amino-acid chain; its full sequence is Somatotropin (204 aa).

A signal peptide spans 1–17; that stretch reads MNSVVLLLSVVCLGVSS. A Pyrrolidone carboxylic acid modification is found at Gln-18. Residue His-36 participates in Zn(2+) binding. An intrachain disulfide couples Cys-69 to Cys-177. Residue Glu-186 coordinates Zn(2+). A disulfide bridge links Cys-194 with Cys-202.

The protein belongs to the somatotropin/prolactin family.

It is found in the secreted. Growth hormone plays an important role in growth control and involved in the regulation of several anabolic processes. The sequence is that of Somatotropin (gh) from Oreochromis niloticus (Nile tilapia).